A 396-amino-acid chain; its full sequence is S-adenosylmethionine synthase (396 aa).

Position 16 (H16) interacts with ATP. D18 contributes to the Mg(2+) binding site. E44 provides a ligand contact to K(+). L-methionine-binding residues include E57 and Q100. A flexible loop region spans residues 100–110; sequence QSVDIAQGVDR. ATP is bound by residues 165 to 167, D240, 246 to 247, A263, and K267; these read DAK and RK. L-methionine is bound at residue D240. K271 lines the L-methionine pocket.

The protein belongs to the AdoMet synthase family. Homotetramer; dimer of dimers. It depends on Mg(2+) as a cofactor. K(+) serves as cofactor.

Its subcellular location is the cytoplasm. The enzyme catalyses L-methionine + ATP + H2O = S-adenosyl-L-methionine + phosphate + diphosphate. It functions in the pathway amino-acid biosynthesis; S-adenosyl-L-methionine biosynthesis; S-adenosyl-L-methionine from L-methionine: step 1/1. In terms of biological role, catalyzes the formation of S-adenosylmethionine (AdoMet) from methionine and ATP. The overall synthetic reaction is composed of two sequential steps, AdoMet formation and the subsequent tripolyphosphate hydrolysis which occurs prior to release of AdoMet from the enzyme. This Pseudomonas entomophila (strain L48) protein is S-adenosylmethionine synthase.